A 160-amino-acid chain; its full sequence is NADH-quinone oxidoreductase subunit B (160 aa).

Residues cysteine 37, cysteine 38, cysteine 102, and cysteine 132 each contribute to the [4Fe-4S] cluster site.

This sequence belongs to the complex I 20 kDa subunit family. NDH-1 is composed of 14 different subunits. Subunits NuoB, C, D, E, F, and G constitute the peripheral sector of the complex. The cofactor is [4Fe-4S] cluster.

Its subcellular location is the cell inner membrane. It carries out the reaction a quinone + NADH + 5 H(+)(in) = a quinol + NAD(+) + 4 H(+)(out). Functionally, NDH-1 shuttles electrons from NADH, via FMN and iron-sulfur (Fe-S) centers, to quinones in the respiratory chain. Couples the redox reaction to proton translocation (for every two electrons transferred, four hydrogen ions are translocated across the cytoplasmic membrane), and thus conserves the redox energy in a proton gradient. The chain is NADH-quinone oxidoreductase subunit B from Neisseria gonorrhoeae (strain ATCC 700825 / FA 1090).